The following is a 430-amino-acid chain: MKTTIKQAKQHLNQEVTIGAWLTNKRSSGKIAFLQLRDGSGFMQGVVVKSEVSDETFQLAKEITQESSLYVTGVITEDNRSDLGYEMQVKSIEVIHEAHDYPITPKNHGTEFLMDHRHLWLRSKKQHAVMKIRNEIIRATYEFFNENGFTKIDPPILTASAPEGTSELFHTKYFDEDAFLSQSGQLYMEAAAMAHGRVFSFGPTFRAEKSKTRRHLIEFWMIEPEMAFTNHVESLEVQEQYVSHVVKSVLKNCQLELKALDRDTSKLEKVSAPFPRISYDDAIKFLKEEGFNDIEWGEDFGAPHETAIANHYDLPVFITNYPTKIKPFYMQPNPENEETVLCADLIAPEGYGEIIGGSERINDLELLEQRIDEHQLDAESYNYYLDLRRYGSVPHSGFGLGLERTVAWISGVEHVRETAPFPRLLNRLYP.

It belongs to the class-II aminoacyl-tRNA synthetase family. As to quaternary structure, homodimer.

The protein resides in the cytoplasm. It carries out the reaction tRNA(Asn) + L-asparagine + ATP = L-asparaginyl-tRNA(Asn) + AMP + diphosphate + H(+). The polypeptide is Asparagine--tRNA ligase (Staphylococcus haemolyticus (strain JCSC1435)).